The chain runs to 444 residues: ATP-dependent protease ATPase subunit HslU (444 aa).

Residues V18, G60 to E65, D258, E323, and R395 contribute to the ATP site.

This sequence belongs to the ClpX chaperone family. HslU subfamily. A double ring-shaped homohexamer of HslV is capped on each side by a ring-shaped HslU homohexamer. The assembly of the HslU/HslV complex is dependent on binding of ATP.

The protein localises to the cytoplasm. In terms of biological role, ATPase subunit of a proteasome-like degradation complex; this subunit has chaperone activity. The binding of ATP and its subsequent hydrolysis by HslU are essential for unfolding of protein substrates subsequently hydrolyzed by HslV. HslU recognizes the N-terminal part of its protein substrates and unfolds these before they are guided to HslV for hydrolysis. In Thioalkalivibrio sulfidiphilus (strain HL-EbGR7), this protein is ATP-dependent protease ATPase subunit HslU.